Here is a 110-residue protein sequence, read N- to C-terminus: Evasin P1166 (110 aa).

Residues 1-24 (MEVKIFTLLQIALFIALGIHLVVA) form the signal peptide. 3 disulfide bridges follow: Cys45-Cys67, Cys49-Cys69, and Cys60-Cys80. A glycan (N-linked (GlcNAc...) asparagine) is linked at Asn48. The tract at residues 89 to 110 (SEYPNPKSSEIDAAAPLPRETH) is disordered.

It is found in the secreted. Salivary chemokine-binding protein which binds to host chemokines CXCL1, CXCL2 and CXCL8. The protein is Evasin P1166 of Ixodes ricinus (Common tick).